We begin with the raw amino-acid sequence, 323 residues long: Secreted frizzled-related protein 3 (323 aa).

Residues 1–32 (MVCCGPGRMLLGWAGLLVLAALCLLQVPGAQA) form the signal peptide. The region spanning 33 to 150 (AACEPVRIPL…VYDRGVCISP (118 aa)) is the FZ domain. 5 disulfides stabilise this stretch: C35–C96, C43–C89, C80–C119, C108–C147, and C112–C136. N49 carries an N-linked (GlcNAc...) asparagine glycan. Positions 178 to 298 (CKCKPVRATQ…WDMKLRHLGL (121 aa)) constitute an NTR domain. The disordered stretch occupies residues 299 to 323 (GKTDASDSTQNQKSGRNSNPRPARS). Residues 304–323 (SDSTQNQKSGRNSNPRPARS) are compositionally biased toward polar residues.

Belongs to the secreted frizzled-related protein (sFRP) family. In terms of assembly, interacts with MYOC. In terms of tissue distribution, expressed in kidney, brain, testis. Weak expression in spleen and heart.

Its subcellular location is the secreted. Its function is as follows. Soluble frizzled-related proteins (sFRPS) function as modulators of Wnt signaling through direct interaction with Wnts. They have a role in regulating cell growth and differentiation in specific cell types. SFRP3/FRZB appears to be involved in limb skeletogenesis. Antagonist of Wnt8 signaling. Regulates chondrocyte maturation and long bone development. This is Secreted frizzled-related protein 3 (Frzb) from Mus musculus (Mouse).